We begin with the raw amino-acid sequence, 419 residues long: Tyrosine--tRNA ligase (419 aa).

Tyrosine 34 serves as a coordination point for L-tyrosine. The 'HIGH' region motif lies at 39–48; the sequence is PTADSLHLGH. The L-tyrosine site is built by tyrosine 169 and glutamine 173. Positions 229–233 match the 'KMSKS' region motif; it reads KFGKS. Lysine 232 provides a ligand contact to ATP. Residues 352–419 enclose the S4 RNA-binding domain; sequence LNIIDLLVTS…KKKYFVLNFK (68 aa).

It belongs to the class-I aminoacyl-tRNA synthetase family. TyrS type 1 subfamily. In terms of assembly, homodimer.

Its subcellular location is the cytoplasm. It catalyses the reaction tRNA(Tyr) + L-tyrosine + ATP = L-tyrosyl-tRNA(Tyr) + AMP + diphosphate + H(+). Functionally, catalyzes the attachment of tyrosine to tRNA(Tyr) in a two-step reaction: tyrosine is first activated by ATP to form Tyr-AMP and then transferred to the acceptor end of tRNA(Tyr). This chain is Tyrosine--tRNA ligase, found in Streptococcus agalactiae serotype V (strain ATCC BAA-611 / 2603 V/R).